The following is a 91-amino-acid chain: RING finger protein Z (91 aa).

The N-myristoyl glycine; by host moiety is linked to residue glycine 2. Residues cysteine 35–cysteine 71 form an RING-type; atypical zinc finger. The short motif at proline 85–proline 88 is the PTAP/PSAP motif element.

It belongs to the arenaviridae Z protein family. Interacts with protein NP; this interaction probably directs the encapsidated genome to budding sites. Interacts (via RING domain) with polymerase L; this interaction inhibits viral transcription and replication, Z partially blocks the product exit tunnel for the releasing nascent RNA product. Interacts with the glycoprotein complex; this interaction plays a role in virion budding. Interacts with host eIF4E; this interaction results in eIF4E reduced affinity for its substrate, the 5'-m7 G cap structure. Interacts (via late-budding domain) with host TSG101; this interaction is essential for budding and release of viral particles. Interacts with host RPLP0; this interaction may serve to load ribosome-like particles inside the virion. Interacts with host PML; this interaction induces PML bodies redistribution in the cytoplasm upon viral infection. Myristoylation is required for the role of RING finger protein Z in assembly and budding.

It localises to the virion. It is found in the host cytoplasm. The protein resides in the host perinuclear region. The protein localises to the host cell membrane. Functionally, plays a crucial role in virion assembly and budding. Expressed late in the virus life cycle, it acts as an inhibitor of viral transcription and RNA synthesis by interacting with the viral polymerase L. Presumably recruits the NP encapsidated genome to cellular membranes at budding sites via direct interaction with NP. Plays critical roles in the final steps of viral release by interacting with host TSG101, a member of the vacuolar protein-sorting pathway and using other cellular host proteins involved in vesicle formation pathway. The budding of the virus progeny occurs after association of protein Z with the viral glycoprotein complex SSP-GP1-GP2 at the cell periphery, step that requires myristoylation of protein Z. Also selectively represses protein production by associating with host eIF4E. In cell-based minigenome assay, has an inhibitory effect on the ribonucleoprotein machinery (vRNP), which is responsible for the replication and transcription of the viral genome. The protein is RING finger protein Z of Latino mammarenavirus (isolate Rat/Bolivia/MARU 1924/1965) (LATV).